The chain runs to 419 residues: CinA-like protein (419 aa).

It belongs to the CinA family.

The sequence is that of CinA-like protein from Synechococcus sp. (strain CC9902).